A 485-amino-acid chain; its full sequence is uncharacterized protein (485 aa).

The protein resides in the virion. This is an uncharacterized protein from Acanthamoeba polyphaga mimivirus (APMV).